A 264-amino-acid polypeptide reads, in one-letter code: S-adenosylmethionine decarboxylase proenzyme (264 aa).

The Schiff-base intermediate with substrate; via pyruvic acid role is filled by S113. S113 bears the Pyruvic acid (Ser); by autocatalysis mark. Catalysis depends on H118, which acts as the Proton acceptor; for processing activity. C141 functions as the Proton donor; for catalytic activity in the catalytic mechanism.

It belongs to the prokaryotic AdoMetDC family. Type 2 subfamily. Heterooctamer of four alpha and four beta chains arranged as a tetramer of alpha/beta heterodimers. Pyruvate serves as cofactor. In terms of processing, is synthesized initially as an inactive proenzyme. Formation of the active enzyme involves a self-maturation process in which the active site pyruvoyl group is generated from an internal serine residue via an autocatalytic post-translational modification. Two non-identical subunits are generated from the proenzyme in this reaction, and the pyruvate is formed at the N-terminus of the alpha chain, which is derived from the carboxyl end of the proenzyme. The post-translation cleavage follows an unusual pathway, termed non-hydrolytic serinolysis, in which the side chain hydroxyl group of the serine supplies its oxygen atom to form the C-terminus of the beta chain, while the remainder of the serine residue undergoes an oxidative deamination to produce ammonia and the pyruvoyl group blocking the N-terminus of the alpha chain.

It catalyses the reaction S-adenosyl-L-methionine + H(+) = S-adenosyl 3-(methylsulfanyl)propylamine + CO2. It functions in the pathway amine and polyamine biosynthesis; S-adenosylmethioninamine biosynthesis; S-adenosylmethioninamine from S-adenosyl-L-methionine: step 1/1. Catalyzes the decarboxylation of S-adenosylmethionine to S-adenosylmethioninamine (dcAdoMet), the propylamine donor required for the synthesis of the polyamines spermine and spermidine from the diamine putrescine. In Xanthomonas oryzae pv. oryzae (strain MAFF 311018), this protein is S-adenosylmethionine decarboxylase proenzyme.